Reading from the N-terminus, the 311-residue chain is uncharacterized protein (311 aa).

This is an uncharacterized protein from Bacillus anthracis.